We begin with the raw amino-acid sequence, 202 residues long: Superoxide dismutase [Mn/Fe] (202 aa).

Positions 27, 81, 163, and 167 each coordinate Fe(3+). The Mn(2+) site is built by H27, H81, D163, and H167.

It belongs to the iron/manganese superoxide dismutase family. It depends on Mn(2+) as a cofactor. The cofactor is Fe(3+).

It catalyses the reaction 2 superoxide + 2 H(+) = H2O2 + O2. In terms of biological role, destroys superoxide anion radicals which are normally produced within the cells and which are toxic to biological systems. Catalyzes the dismutation of superoxide anion radicals into O2 and H2O2 by successive reduction and oxidation of the transition metal ion at the active site. The sequence is that of Superoxide dismutase [Mn/Fe] (sodA) from Streptococcus agalactiae serotype V (strain ATCC BAA-611 / 2603 V/R).